A 329-amino-acid chain; its full sequence is Malate dehydrogenase (329 aa).

12–18 (GAAGQIG) is a binding site for NAD(+). Residues R93 and R99 each coordinate substrate. Residues N106, Q113, and 130–132 (TGN) contribute to the NAD(+) site. Residues N132 and R163 each contribute to the substrate site. H188 acts as the Proton acceptor in catalysis.

It belongs to the LDH/MDH superfamily. MDH type 2 family.

The enzyme catalyses (S)-malate + NAD(+) = oxaloacetate + NADH + H(+). Catalyzes the reversible oxidation of malate to oxaloacetate. The sequence is that of Malate dehydrogenase from Mycobacterium bovis (strain ATCC BAA-935 / AF2122/97).